Reading from the N-terminus, the 253-residue chain is FGFR1 oncogene partner 2 (253 aa).

The stretch at 5–104 (IEKALADAKA…SALELIMSKY (100 aa)) forms a coiled coil. S141 carries the post-translational modification Phosphoserine. Positions 160-223 (LERRHLEANQ…LREILQITRE (64 aa)) form a coiled coil. The disordered stretch occupies residues 231–253 (DDASESTSLSALVTNSDLSLRKS). Residues 235–253 (ESTSLSALVTNSDLSLRKS) show a composition bias toward polar residues.

The protein belongs to the SIKE family. In terms of tissue distribution, expressed in bone marrow, spleen and thymus.

Its subcellular location is the cytoplasm. Its function is as follows. May be involved in wound healing pathway. This Homo sapiens (Human) protein is FGFR1 oncogene partner 2 (FGFR1OP2).